The following is a 79-amino-acid chain: Probable [Fe-S]-dependent transcriptional repressor (79 aa).

Iron-sulfur cluster contacts are provided by Cys-54, Cys-59, Cys-62, and Cys-68.

The protein belongs to the FeoC family.

In terms of biological role, may function as a transcriptional regulator that controls feoABC expression. This chain is Probable [Fe-S]-dependent transcriptional repressor, found in Photorhabdus laumondii subsp. laumondii (strain DSM 15139 / CIP 105565 / TT01) (Photorhabdus luminescens subsp. laumondii).